We begin with the raw amino-acid sequence, 197 residues long: Holliday junction branch migration complex subunit RuvA (197 aa).

Residues 1-63 form a domain I region; it reads MFEYLNGKLV…EDAHSLYGFV (63 aa). The tract at residues 64–142 is domain II; sequence NESEKALFLR…ATGAVGISLL (79 aa). A flexible linker region spans residues 142-146; sequence LDAAP. The interval 147–197 is domain III; it reads AGNLALEEAIEALQALGYKATELKKIEKKLEQEAGLTSEEYIKSALKLMMK.

It belongs to the RuvA family. Homotetramer. Forms an RuvA(8)-RuvB(12)-Holliday junction (HJ) complex. HJ DNA is sandwiched between 2 RuvA tetramers; dsDNA enters through RuvA and exits via RuvB. An RuvB hexamer assembles on each DNA strand where it exits the tetramer. Each RuvB hexamer is contacted by two RuvA subunits (via domain III) on 2 adjacent RuvB subunits; this complex drives branch migration. In the full resolvosome a probable DNA-RuvA(4)-RuvB(12)-RuvC(2) complex forms which resolves the HJ.

Its subcellular location is the cytoplasm. The RuvA-RuvB-RuvC complex processes Holliday junction (HJ) DNA during genetic recombination and DNA repair, while the RuvA-RuvB complex plays an important role in the rescue of blocked DNA replication forks via replication fork reversal (RFR). RuvA specifically binds to HJ cruciform DNA, conferring on it an open structure. The RuvB hexamer acts as an ATP-dependent pump, pulling dsDNA into and through the RuvAB complex. HJ branch migration allows RuvC to scan DNA until it finds its consensus sequence, where it cleaves and resolves the cruciform DNA. This chain is Holliday junction branch migration complex subunit RuvA, found in Lactococcus lactis subsp. cremoris (strain SK11).